The chain runs to 193 residues: Probable GTP-binding protein EngB (193 aa).

An EngB-type G domain is found at 22-193 (ALPEFALAGR…EAWAALERFL (172 aa)). Residues 30–37 (GRSNVGKS), 57–61 (GKTQT), 75–78 (DVPG), 142–145 (TKAD), and 174–176 (FSA) each bind GTP. Residues Ser-37 and Thr-59 each contribute to the Mg(2+) site.

The protein belongs to the TRAFAC class TrmE-Era-EngA-EngB-Septin-like GTPase superfamily. EngB GTPase family. Mg(2+) is required as a cofactor.

Necessary for normal cell division and for the maintenance of normal septation. The chain is Probable GTP-binding protein EngB from Geobacillus sp. (strain WCH70).